The following is a 753-amino-acid chain: 5-methyltetrahydropteroyltriglutamate--homocysteine methyltransferase (753 aa).

5-methyltetrahydropteroyltri-L-glutamate-binding positions include 17–20 and Lys-117; that span reads RELK. Residues 431 to 433 and Glu-484 each bind L-homocysteine; that span reads IGS. Residues 431 to 433 and Glu-484 each bind L-methionine; that span reads IGS. 5-methyltetrahydropteroyltri-L-glutamate is bound by residues 515-516 and Trp-561; that span reads RC. L-homocysteine is bound at residue Asp-599. Asp-599 contacts L-methionine. Glu-605 lines the 5-methyltetrahydropteroyltri-L-glutamate pocket. The Zn(2+) site is built by His-641, Cys-643, and Glu-665. His-694 acts as the Proton donor in catalysis. Zn(2+) is bound at residue Cys-726.

It belongs to the vitamin-B12 independent methionine synthase family. Requires Zn(2+) as cofactor.

The catalysed reaction is 5-methyltetrahydropteroyltri-L-glutamate + L-homocysteine = tetrahydropteroyltri-L-glutamate + L-methionine. It participates in amino-acid biosynthesis; L-methionine biosynthesis via de novo pathway; L-methionine from L-homocysteine (MetE route): step 1/1. In terms of biological role, catalyzes the transfer of a methyl group from 5-methyltetrahydrofolate to homocysteine resulting in methionine formation. The protein is 5-methyltetrahydropteroyltriglutamate--homocysteine methyltransferase of Shigella dysenteriae serotype 1 (strain Sd197).